The sequence spans 389 residues: Protein MEI2-like 7 (389 aa).

Positions R170–R184 are enriched in basic residues. A disordered region spans residues R170–L211. In terms of domain architecture, RRM spans T216–I320. The segment at P351–V370 is disordered.

Functionally, probable RNA-binding protein that may play a role in growth regulation. The polypeptide is Protein MEI2-like 7 (OML7) (Oryza sativa subsp. japonica (Rice)).